A 305-amino-acid chain; its full sequence is MAAREESTQSANRVLRISQLDALELNKALEQLVWSQFTQCFHGFKPGLLARFEPEVKAFLWLFLWRFTIYSKNATVGQSVLNIQHKNDSSPNPVYQPPSKNQKLLYAVCTIGGRWLEERCYDLFRNRHLASFGKAKQCMNFVVGLLKLGELMNFLIFLQKGKFATLTERLLGIHSVFCKPQNMREVGFEYMNRELLWHGFAEFLIFLLPLINIQKLKAKLSSWCTLCTGAAGHDSTLGSSGKECALCGEWPTMPHTIGCEHVFCYYCVKSSFLFDIYFTCPKCGTEVHSVQPLKAGIQMSEVNAL.

At 1–15 (MAAREESTQSANRVL) the chain is on the peroxisomal matrix side. Residues 16–42 (RISQLDALELNKALEQLVWSQFTQCFH) traverse the membrane as a helical segment. Over 43 to 48 (GFKPGL) the chain is Cytoplasmic. A helical membrane pass occupies residues 49 to 74 (LARFEPEVKAFLWLFLWRFTIYSKNA). Residues 75–98 (TVGQSVLNIQHKNDSSPNPVYQPP) are Peroxisomal matrix-facing. A helical membrane pass occupies residues 99–125 (SKNQKLLYAVCTIGGRWLEERCYDLFR). The Cytoplasmic portion of the chain corresponds to 126–133 (NRHLASFG). A helical membrane pass occupies residues 134 to 160 (KAKQCMNFVVGLLKLGELMNFLIFLQK). Topologically, residues 161–187 (GKFATLTERLLGIHSVFCKPQNMREVG) are peroxisomal matrix. The helical transmembrane segment at 188–211 (FEYMNRELLWHGFAEFLIFLLPLI) threads the bilayer. Over 212–305 (NIQKLKAKLS…GIQMSEVNAL (94 aa)) the chain is Cytoplasmic. Residues C244, C247, C259, H261, C264, C267, C280, and C283 each contribute to the Zn(2+) site. The RING-type zinc-finger motif lies at 244-284 (CALCGEWPTMPHTIGCEHVFCYYCVKSSFLFDIYFTCPKCG).

This sequence belongs to the pex2/pex10/pex12 family. Component of the PEX2-PEX10-PEX12 retrotranslocation channel, composed of PEX2, PEX10 and PEX12. In terms of processing, forms intramolecular and intermolecular disulfide bonds in response to reactive oxygen species (ROS), promoting higher stability.

It localises to the peroxisome membrane. It carries out the reaction [E2 ubiquitin-conjugating enzyme]-S-ubiquitinyl-L-cysteine + [acceptor protein]-L-cysteine = [E2 ubiquitin-conjugating enzyme]-L-cysteine + [acceptor protein]-S-ubiquitinyl-L-cysteine.. It catalyses the reaction S-ubiquitinyl-[E2 ubiquitin-conjugating enzyme]-L-cysteine + [acceptor protein]-L-lysine = [E2 ubiquitin-conjugating enzyme]-L-cysteine + N(6)-ubiquitinyl-[acceptor protein]-L-lysine.. It functions in the pathway protein modification; protein ubiquitination. E3 ubiquitin-protein ligase component of a retrotranslocation channel required for peroxisome organization by mediating export of the PEX5 receptor from peroxisomes to the cytosol, thereby promoting PEX5 recycling. The retrotranslocation channel is composed of PEX2, PEX10 and PEX12; each subunit contributing transmembrane segments that coassemble into an open channel that specifically allows the passage of PEX5 through the peroxisomal membrane. PEX2 also regulates peroxisome organization by acting as a E3 ubiquitin-protein ligase. PEX2 ubiquitinates PEX5 during its passage through the retrotranslocation channel: catalyzes monoubiquitination of PEX5 at 'Cys-11', a modification that acts as a signal for PEX5 extraction into the cytosol. Required for pexophagy in response to starvation by mediating ubiquitination of peroxisomal proteins, such as PEX5 and ABCD3/PMP70. Also involved in the response to reactive oxygen species (ROS) by mediating 'Lys-48'-linked polyubiquitination and subsequent degradation of PNPLA2/ATGL, thereby regulating lipolysis. This is Peroxisome biogenesis factor 2 from Mus musculus (Mouse).